Consider the following 472-residue polypeptide: Transmembrane protein 8B (472 aa).

A disordered region spans residues 1–37 (MNMPQSLGNQPLPPEPPSLRTPAEGPGATSPPEHCWP). The Extracellular portion of the chain corresponds to 1 to 233 (MNMPQSLGNQ…ADALTYGFQL (233 aa)). Residues Asn-92 and Asn-100 are each glycosylated (N-linked (GlcNAc...) asparagine). The EGF-like domain occupies 182–221 (FLSPCVDDCGPYGQCKLLRTHNYLYAACECKAGWRGWGCT). Cystine bridges form between Cys-186-Cys-196, Cys-190-Cys-209, and Cys-211-Cys-220. A helical transmembrane segment spans residues 234 to 254 (LSTLLLCLSNLMFLPPVVLAI). Residues 255–257 (RSR) lie on the Cytoplasmic side of the membrane. Residues 258–277 (YVLEAAVYTFTMFFSTFYHA) traverse the membrane as a helical segment. Topologically, residues 278 to 292 (CDQPGIVVFCIMDYD) are extracellular. Residues 293–313 (VLQFCDFLGSLMSVWVTVIAM) traverse the membrane as a helical segment. The Cytoplasmic portion of the chain corresponds to 314–315 (AR). Residues 316 to 336 (LQPVVKQVLYLLGAMLLSMAL) form a helical membrane-spanning segment. The Extracellular portion of the chain corresponds to 337-342 (QLDRHG). A helical membrane pass occupies residues 343–363 (LWNLLGPSLFALGILATAWTV). Residues 364-379 (RSVRRRHCYPPTWRRW) are Cytoplasmic-facing. The chain crosses the membrane as a helical span at residues 380 to 400 (LFCLCPGSLIAGSAILLYAFV). Residues 401–405 (ETRDN) lie on the Extracellular side of the membrane. A helical membrane pass occupies residues 406-426 (YFYIHSIWHMLIAGSVGFLLP). Over 427-472 (PRAKTDRRVPSGARARGCGYQLCINEQEELGLVGPGGATVSSICAS) the chain is Cytoplasmic.

It belongs to the TMEM8 family. In terms of assembly, may interact with EZR. Post-translationally, N-glycosylated.

Its subcellular location is the cell membrane. The protein localises to the cytoplasm. The protein resides in the nucleus. It is found in the mitochondrion. It localises to the endoplasmic reticulum. Functionally, may function as a regulator of the EGFR pathway. Probable tumor suppressor which may function in cell growth, proliferation and adhesion. In Bos taurus (Bovine), this protein is Transmembrane protein 8B (TMEM8B).